Consider the following 287-residue polypeptide: Pantothenate synthetase (287 aa).

Residue 30–37 (MGALHSGH) coordinates ATP. The active-site Proton donor is the His37. Position 61 (Gln61) interacts with (R)-pantoate. Gln61 lines the beta-alanine pocket. 152 to 155 (GQKD) provides a ligand contact to ATP. Gln158 is a binding site for (R)-pantoate. ATP is bound by residues Ile181 and 189-192 (ESSR).

Belongs to the pantothenate synthetase family. In terms of assembly, homodimer.

It is found in the cytoplasm. It catalyses the reaction (R)-pantoate + beta-alanine + ATP = (R)-pantothenate + AMP + diphosphate + H(+). It functions in the pathway cofactor biosynthesis; (R)-pantothenate biosynthesis; (R)-pantothenate from (R)-pantoate and beta-alanine: step 1/1. Catalyzes the condensation of pantoate with beta-alanine in an ATP-dependent reaction via a pantoyl-adenylate intermediate. In Corynebacterium efficiens (strain DSM 44549 / YS-314 / AJ 12310 / JCM 11189 / NBRC 100395), this protein is Pantothenate synthetase.